The primary structure comprises 395 residues: Envelope glycoprotein D (395 aa).

The first 17 residues, M1 to A17, serve as a signal peptide directing secretion. Residues R18–G342 are Virion surface-facing. H63 is a Zn(2+) binding site. Disulfide bonds link C90/C214, C131/C227, and C143/C152. N-linked (GlcNAc...) asparagine; by host glycosylation is present at N119. D240 serves as a coordination point for Zn(2+). Residues L261–D306 are profusion. N-linked (GlcNAc...) asparagine; by host glycosylation occurs at N287. A disordered region spans residues T289–A314. A helical membrane pass occupies residues A343–V362. Residues Y363–Y395 are Intravirion-facing.

It belongs to the herpesviridae glycoprotein D family.

It is found in the virion membrane. Its function is as follows. Envelope glycoprotein that binds to host cell entry receptors, promoting the virus entry into host cells. May trigger fusion with host membrane, by recruiting the fusion machinery composed of gB and gH/gL. This is Envelope glycoprotein D (gD) from Cercopithecine herpesvirus 1 (CeHV-1).